A 186-amino-acid chain; its full sequence is Transcription factor FapR (186 aa).

One can recognise a MaoC-like domain in the interval 98–168 (FTKTQIARGH…YVIEVNSYVR (71 aa)).

It belongs to the FapR family.

Its function is as follows. Transcriptional factor involved in regulation of membrane lipid biosynthesis by repressing genes involved in fatty acid and phospholipid metabolism. The sequence is that of Transcription factor FapR from Staphylococcus haemolyticus (strain JCSC1435).